The chain runs to 529 residues: Bifunctional purine biosynthesis protein PurH (529 aa).

The MGS-like domain maps to 1 to 148 (MQQRRPVRRA…KNHKDVAIVV (148 aa)).

Belongs to the PurH family.

The enzyme catalyses (6R)-10-formyltetrahydrofolate + 5-amino-1-(5-phospho-beta-D-ribosyl)imidazole-4-carboxamide = 5-formamido-1-(5-phospho-D-ribosyl)imidazole-4-carboxamide + (6S)-5,6,7,8-tetrahydrofolate. It carries out the reaction IMP + H2O = 5-formamido-1-(5-phospho-D-ribosyl)imidazole-4-carboxamide. The protein operates within purine metabolism; IMP biosynthesis via de novo pathway; 5-formamido-1-(5-phospho-D-ribosyl)imidazole-4-carboxamide from 5-amino-1-(5-phospho-D-ribosyl)imidazole-4-carboxamide (10-formyl THF route): step 1/1. It participates in purine metabolism; IMP biosynthesis via de novo pathway; IMP from 5-formamido-1-(5-phospho-D-ribosyl)imidazole-4-carboxamide: step 1/1. The sequence is that of Bifunctional purine biosynthesis protein PurH from Salmonella paratyphi A (strain ATCC 9150 / SARB42).